We begin with the raw amino-acid sequence, 776 residues long: Protein STRUBBELIG-RECEPTOR FAMILY 3 (776 aa).

The first 29 residues, 1 to 29 (MAAKRSIYCLLLLPLLLSLLIWIPSISLA), serve as a signal peptide directing secretion. The Cytoplasmic segment spans residues 30–35 (ATNPDD). A helical membrane pass occupies residues 36–56 (VAAINGLFAALGAPVLPGWIA). The Extracellular segment spans residues 57 to 316 (SGGDPCGEAW…KGKNSSHTKK (260 aa)). Asparagine 72 is a glycosylation site (N-linked (GlcNAc...) asparagine). LRR repeat units lie at residues 99–120 (SIRGIDFSNNRIGGSIPSTLPV), 121–143 (TLQHFFLSANQFTGSIPESLGTL), 145–167 (FLNDMSLNDNLLSGELPDVFQNL), 169–191 (GLINLDISSNNISGTLPPSMENL), 193–215 (TLTTLRVQNNQLSGTLDVLQGLP), and 216–236 (LQDLNIENNLFSGPIPDKLLS). An N-linked (GlcNAc...) asparagine glycan is attached at asparagine 179. N-linked (GlcNAc...) asparagine glycosylation is found at asparagine 248 and asparagine 253. The tract at residues 251–311 (MINSTSTAPS…SSENSKGKNS (61 aa)) is disordered. The span at 254–268 (STSTAPSLSPSLSPT) shows a compositional bias: low complexity. Over residues 269–284 (KPAPTRPFSGVPPPPN) the composition is skewed to pro residues. Low complexity predominate over residues 298-309 (SEGSSSENSKGK). A glycan (N-linked (GlcNAc...) asparagine) is linked at asparagine 310. A helical transmembrane segment spans residues 317–337 (IILIAFAGVLVFIILVLAILL). Residues 338–776 (LLPKCARRRE…RHGSGDSTAD (439 aa)) lie on the Cytoplasmic side of the membrane. The interval 355–440 (PHQVGADRGS…PPPPPPPPPP (86 aa)) is disordered. Over residues 381–407 (RSEKVQREPFKKAGEEPKVLHDLERLR) the composition is skewed to basic and acidic residues. Over residues 426-440 (MPPPPPPPPPPPPPP) the composition is skewed to pro residues. Positions 485–763 (FAQENLIGSG…EVVQDLLDMI (279 aa)) constitute a Protein kinase domain. Residues 491 to 499 (IGSGMLGSV) and lysine 513 each bind ATP.

This sequence belongs to the protein kinase superfamily. Ser/Thr protein kinase family. As to expression, expressed in seedlings, roots, stems, leaves, flowers and siliques.

Its subcellular location is the membrane. Not essential for epidermal patterning and not redundant with STRUBBELIG. The polypeptide is Protein STRUBBELIG-RECEPTOR FAMILY 3 (SRF3) (Arabidopsis thaliana (Mouse-ear cress)).